The primary structure comprises 339 residues: Anthranilate phosphoribosyltransferase (339 aa).

Residues Gly-78, 81–82 (GD), Thr-86, 88–91 (NAST), 106–114 (KHGNRSVTS), and Ser-118 contribute to the 5-phospho-alpha-D-ribose 1-diphosphate site. Gly-78 is an anthranilate binding site. Ser-90 contacts Mg(2+). Asn-109 is a binding site for anthranilate. Arg-164 is an anthranilate binding site. Residues Asp-225 and Glu-226 each coordinate Mg(2+). A compositionally biased stretch (basic and acidic residues) spans 248-265 (TVAPEDVGLDRADPKDVA). The interval 248-271 (TVAPEDVGLDRADPKDVAGADPET) is disordered.

It belongs to the anthranilate phosphoribosyltransferase family. Homodimer. Requires Mg(2+) as cofactor.

The enzyme catalyses N-(5-phospho-beta-D-ribosyl)anthranilate + diphosphate = 5-phospho-alpha-D-ribose 1-diphosphate + anthranilate. The protein operates within amino-acid biosynthesis; L-tryptophan biosynthesis; L-tryptophan from chorismate: step 2/5. Catalyzes the transfer of the phosphoribosyl group of 5-phosphorylribose-1-pyrophosphate (PRPP) to anthranilate to yield N-(5'-phosphoribosyl)-anthranilate (PRA). The polypeptide is Anthranilate phosphoribosyltransferase (Methanopyrus kandleri (strain AV19 / DSM 6324 / JCM 9639 / NBRC 100938)).